The primary structure comprises 92 residues: MSLPSLDSVPMLRRGFRFQFEPAQDCHVLLYPEGMVKLNDSAGEILKLVDGRRDVAAIVAALRERFPEVPGIDEDILAFLEVAHAQFWIELQ.

The protein belongs to the PqqD family. As to quaternary structure, monomer. Interacts with PqqE.

The protein operates within cofactor biosynthesis; pyrroloquinoline quinone biosynthesis. Functions as a PqqA binding protein and presents PqqA to PqqE, in the pyrroloquinoline quinone (PQQ) biosynthetic pathway. This is PqqA binding protein from Pseudomonas aeruginosa (strain UCBPP-PA14).